A 78-amino-acid chain; its full sequence is Small ribosomal subunit protein bS18 (78 aa).

This sequence belongs to the bacterial ribosomal protein bS18 family. As to quaternary structure, part of the 30S ribosomal subunit. Forms a tight heterodimer with protein bS6.

Its function is as follows. Binds as a heterodimer with protein bS6 to the central domain of the 16S rRNA, where it helps stabilize the platform of the 30S subunit. The protein is Small ribosomal subunit protein bS18 of Lacticaseibacillus casei (strain BL23) (Lactobacillus casei).